The following is a 1593-amino-acid chain: Autotransporter CRAC (1593 aa).

The first 54 residues, methionine 1 to alanine 54, serve as a signal peptide directing secretion. Residues glycine 65–asparagine 85 show a composition bias toward polar residues. 2 disordered regions span residues glycine 65–serine 100 and lysine 1267–proline 1286. Residues serine 86–serine 97 are compositionally biased toward low complexity. Residues aspartate 1269–threonine 1280 show a composition bias toward polar residues. Residues asparagine 1325–phenylalanine 1593 form the Autotransporter domain.

Glycosylated by heptosyltransferas BAHTCr. Glycosylation is required for adhesion to mammalian cells and colonization of the mouse host gastrointestinal tract.

The protein localises to the cell outer membrane. Functionally, autotransporter required for the colonization of the mouse host gastrointestinal tract, possibly by mediating bacteria adhesion to host cells. The protein is Autotransporter CRAC of Citrobacter rodentium (strain ICC168) (Citrobacter freundii biotype 4280).